The following is a 325-amino-acid chain: Tetraacyldisaccharide 4'-kinase (325 aa).

55–62 is an ATP binding site; it reads TAGGNGKT.

Belongs to the LpxK family.

It carries out the reaction a lipid A disaccharide + ATP = a lipid IVA + ADP + H(+). Its pathway is glycolipid biosynthesis; lipid IV(A) biosynthesis; lipid IV(A) from (3R)-3-hydroxytetradecanoyl-[acyl-carrier-protein] and UDP-N-acetyl-alpha-D-glucosamine: step 6/6. Functionally, transfers the gamma-phosphate of ATP to the 4'-position of a tetraacyldisaccharide 1-phosphate intermediate (termed DS-1-P) to form tetraacyldisaccharide 1,4'-bis-phosphate (lipid IVA). This Salmonella paratyphi B (strain ATCC BAA-1250 / SPB7) protein is Tetraacyldisaccharide 4'-kinase.